The following is a 91-amino-acid chain: Early E3B 10.4 kDa protein (91 aa).

An N-terminal signal peptide occupies residues 1–22 (MIPRVFILLTLVALFCACSTLA). Topologically, residues 23–34 (AVSHIEVDCIPA) are lumenal. Residues 35–60 (FTVYLLYGFVTLTLICSLITVVIAFI) traverse the membrane as a helical segment. At 61–91 (QCIDWVCVRFAYLRHHPQYRDRTIAELLRIL) the chain is on the cytoplasmic side.

It belongs to the adenoviridae E3B family.

The protein resides in the host endoplasmic reticulum membrane. Functionally, down-regulates the EGF receptor. This Homo sapiens (Human) protein is Early E3B 10.4 kDa protein.